The sequence spans 391 residues: Elongation factor Tu 1 (391 aa).

Positions 10-201 constitute a tr-type G domain; it reads KPHVNIGTIG…AVDSYIPTPE (192 aa). Positions 19–26 are G1; it reads GHVDHGKT. 19–26 contacts GTP; the sequence is GHVDHGKT. Threonine 26 is a Mg(2+) binding site. The tract at residues 55 to 59 is G2; that stretch reads GITIS. Residues 76–79 form a G3 region; that stretch reads DCPG. Residues 76–80 and 131–134 each bind GTP; these read DCPGH and NKVD. The tract at residues 131–134 is G4; the sequence is NKVD. Residues 169 to 171 are G5; sequence SAL.

It belongs to the TRAFAC class translation factor GTPase superfamily. Classic translation factor GTPase family. EF-Tu/EF-1A subfamily. Monomer.

Its subcellular location is the cytoplasm. It catalyses the reaction GTP + H2O = GDP + phosphate + H(+). Its function is as follows. GTP hydrolase that promotes the GTP-dependent binding of aminoacyl-tRNA to the A-site of ribosomes during protein biosynthesis. The sequence is that of Elongation factor Tu 1 from Rhizobium etli (strain ATCC 51251 / DSM 11541 / JCM 21823 / NBRC 15573 / CFN 42).